Consider the following 380-residue polypeptide: Forkhead box protein F1 (380 aa).

Polar residues predominate over residues Met-1–Met-19. Positions Met-1–Arg-49 are disordered. A DNA-binding region (fork-head) is located at residues Lys-52 to Arg-146.

It localises to the nucleus. The chain is Forkhead box protein F1 (foxf1) from Danio rerio (Zebrafish).